The following is a 274-amino-acid chain: Oxidized low-density lipoprotein receptor 1 (274 aa).

A disordered region spans residues 1–28 (MTLDDLKSNSMKDQPDEKSNGDKAEGPR). Topologically, residues 1–37 (MTLDDLKSNSMKDQPDEKSNGDKAEGPRSLSTLRWRP) are cytoplasmic. The span at 13–26 (DQPDEKSNGDKAEG) shows a compositional bias: basic and acidic residues. A helical; Signal-anchor for type II membrane protein transmembrane segment spans residues 38–60 (AALILGLLCLGLLVTVILLIIQL). The S-palmitoyl cysteine moiety is linked to residue cysteine 46. Positions 61-150 (SQVSDLLKQQ…SGPCPQDWLW (90 aa)) are neck. Residues 61–274 (SQVSDLLKQQ…QKRANLLRAQ (214 aa)) lie on the Extracellular side of the membrane. The stretch at 89 to 142 (RQAEKSSQESQRELTEMIETLAHKLDEKSKKLMELQQQNLNLQKALEKAANFSG) forms a coiled coil. A glycan (N-linked (GlcNAc...) asparagine) is linked at asparagine 139. Cystine bridges form between cysteine 144–cysteine 155, cysteine 172–cysteine 264, and cysteine 243–cysteine 256. One can recognise a C-type lectin domain in the interval 151–265 (HEENCYKFSS…CILNAFSICQ (115 aa)).

In terms of assembly, homodimer; disulfide-linked. May form a hexamer composed of 3 homodimers. Interacts with HSP70. Post-translationally, N-glycosylated.

The protein localises to the cell membrane. Its subcellular location is the membrane raft. It localises to the secreted. Functionally, receptor that mediates the recognition, internalization and degradation of oxidatively modified low density lipoprotein (oxLDL) by vascular endothelial cells. OxLDL is a marker of atherosclerosis that induces vascular endothelial cell activation and dysfunction, resulting in pro-inflammatory responses, pro-oxidative conditions and apoptosis. Its association with oxLDL induces the activation of NF-kappa-B through an increased production of intracellular reactive oxygen and a variety of pro-atherogenic cellular responses including a reduction of nitric oxide (NO) release, monocyte adhesion and apoptosis. In addition to binding oxLDL, it acts as a receptor for the HSP70 protein involved in antigen cross-presentation to naive T-cells in dendritic cells, thereby participating in cell-mediated antigen cross-presentation. Also involved in inflammatory process, by acting as a leukocyte-adhesion molecule at the vascular interface in endotoxin-induced inflammation. Also acts as a receptor for advanced glycation end (AGE) products, activated platelets, monocytes, apoptotic cells and both Gram-negative and Gram-positive bacteria. The sequence is that of Oxidized low-density lipoprotein receptor 1 (OLR1) from Sus scrofa (Pig).